We begin with the raw amino-acid sequence, 499 residues long: MTPRYVLAIDQGTTSSRAILFDRAGDIVGSAQREFAQIFPQPGWVEHDPREILTSVYATLTELLSREQIDPRHIAALGITNQRETTVVWDRATGQPIHNAIVWQSRQSHAICERLKCDGHEARVRERTGLLIDAYFSATKVRWILDHVEGAQQRAERGELLFGTIDSWLVWNLSGGQAHVTDYSNAARTLLFNIHTLDWDDDLLALLDIPRAMLPQVRDSSTVYAHTRPQFFFDHPIPIAGIAGDQQAALFGQACFLPGMVKNTYGTGCFMLMHTGTQAVRSRNGLLTTIAWGLDGRVEYALEGSIFIAGSVVQWLRDGLRMIERASDSQALAAQVPDSGGAYLVPAFVGLGAPYWRSDVRGAMFGLTRGTRKAHFVRAALEAMAYQTRDVLDAMQSDAGIALTELRADGGAIGNDFLAGFQADILGVPLLRPRLTETTALGAAYLAGLAVGFWSSREQIAAQWGLDRRFEPQMEVARREKLYAGWQQAVAATLAFHVD.

ADP is bound at residue T13. ATP is bound by residues T13, T14, and S15. T13 serves as a coordination point for sn-glycerol 3-phosphate. Residue R17 coordinates ADP. R83, E84, Y135, and D245 together coordinate sn-glycerol 3-phosphate. 5 residues coordinate glycerol: R83, E84, Y135, D245, and Q246. Positions 267 and 310 each coordinate ADP. Residues T267, G310, Q314, and G411 each coordinate ATP. The ADP site is built by G411 and N415.

This sequence belongs to the FGGY kinase family.

The enzyme catalyses glycerol + ATP = sn-glycerol 3-phosphate + ADP + H(+). The protein operates within polyol metabolism; glycerol degradation via glycerol kinase pathway; sn-glycerol 3-phosphate from glycerol: step 1/1. With respect to regulation, inhibited by fructose 1,6-bisphosphate (FBP). In terms of biological role, key enzyme in the regulation of glycerol uptake and metabolism. Catalyzes the phosphorylation of glycerol to yield sn-glycerol 3-phosphate. The sequence is that of Glycerol kinase from Stenotrophomonas maltophilia (strain K279a).